Here is a 167-residue protein sequence, read N- to C-terminus: MKPQLLLLEDVDGLGRSGDLVVAKPGYVRNYLLPKGKAVVASAGTLRLQAKLQEQRLLQAAADKEESLRLAETLRSLVLDFQVRVDSENNMYGSVTVNDIISVADQKGVVLTRKNFPRAHSGVKTLGKHVIGLKLKEGVTADLHLEVRADHEIAEQKELQSMEEQED.

Belongs to the bacterial ribosomal protein bL9 family.

Binds to the 23S rRNA. In Chlamydia muridarum (strain MoPn / Nigg), this protein is Large ribosomal subunit protein bL9.